The chain runs to 301 residues: Protease HtpX (301 aa).

2 consecutive transmembrane segments (helical) span residues 4–24 and 44–64; these read IGLF…VLFI and TGLL…SLAM. His-150 contributes to the Zn(2+) binding site. Residue Glu-151 is part of the active site. Zn(2+) is bound at residue His-154. 2 helical membrane passes run 165-185 and 201-221; these read LIQG…GHFV and FITS…IVMW. Glu-227 contacts Zn(2+).

Belongs to the peptidase M48B family. Zn(2+) is required as a cofactor.

It localises to the cell inner membrane. The chain is Protease HtpX from Alkalilimnicola ehrlichii (strain ATCC BAA-1101 / DSM 17681 / MLHE-1).